A 264-amino-acid chain; its full sequence is ATP synthase subunit a (264 aa).

6 helical membrane-spanning segments follow: residues 29–49 (TWHIDSLFFSVGLGVLFLWLF), 90–110 (IAPLALTIFVWVFMMNFMDMI), 134–154 (DLNITFSLALGVFVLIIYYSI), 177–197 (IPVNLLLESVTLIAKPISLAL), 208–228 (LIFILIALMYGANLALSALGV), and 235–255 (LIFHILVITLQAFIFMMLTIV).

This sequence belongs to the ATPase A chain family. F-type ATPases have 2 components, CF(1) - the catalytic core - and CF(0) - the membrane proton channel. CF(1) has five subunits: alpha(3), beta(3), gamma(1), delta(1), epsilon(1). CF(0) has three main subunits: a(1), b(2) and c(9-12). The alpha and beta chains form an alternating ring which encloses part of the gamma chain. CF(1) is attached to CF(0) by a central stalk formed by the gamma and epsilon chains, while a peripheral stalk is formed by the delta and b chains.

It localises to the cell inner membrane. In terms of biological role, key component of the proton channel; it plays a direct role in the translocation of protons across the membrane. The chain is ATP synthase subunit a from Shewanella loihica (strain ATCC BAA-1088 / PV-4).